A 376-amino-acid chain; its full sequence is N-acetyldiaminopimelate deacetylase (376 aa).

D69 is a catalytic residue. Catalysis depends on E128, which acts as the Proton acceptor.

The protein belongs to the peptidase M20A family. N-acetyldiaminopimelate deacetylase subfamily.

It carries out the reaction N-acetyl-(2S,6S)-2,6-diaminopimelate + H2O = (2S,6S)-2,6-diaminopimelate + acetate. It functions in the pathway amino-acid biosynthesis; L-lysine biosynthesis via DAP pathway; LL-2,6-diaminopimelate from (S)-tetrahydrodipicolinate (acetylase route): step 3/3. Its function is as follows. Catalyzes the conversion of N-acetyl-diaminopimelate to diaminopimelate and acetate. The polypeptide is N-acetyldiaminopimelate deacetylase (Bacillus cytotoxicus (strain DSM 22905 / CIP 110041 / 391-98 / NVH 391-98)).